The chain runs to 941 residues: Isoleucine--tRNA ligase (941 aa).

Residues 58–68 (PYANGNIHIGH) carry the 'HIGH' region motif. Residue Glu564 coordinates L-isoleucyl-5'-AMP. Positions 605–609 (KMSKS) match the 'KMSKS' region motif. Position 608 (Lys608) interacts with ATP. 4 residues coordinate Zn(2+): Cys904, Cys907, Cys924, and Cys927.

The protein belongs to the class-I aminoacyl-tRNA synthetase family. IleS type 1 subfamily. In terms of assembly, monomer. The cofactor is Zn(2+).

It is found in the cytoplasm. The enzyme catalyses tRNA(Ile) + L-isoleucine + ATP = L-isoleucyl-tRNA(Ile) + AMP + diphosphate. Its function is as follows. Catalyzes the attachment of isoleucine to tRNA(Ile). As IleRS can inadvertently accommodate and process structurally similar amino acids such as valine, to avoid such errors it has two additional distinct tRNA(Ile)-dependent editing activities. One activity is designated as 'pretransfer' editing and involves the hydrolysis of activated Val-AMP. The other activity is designated 'posttransfer' editing and involves deacylation of mischarged Val-tRNA(Ile). This is Isoleucine--tRNA ligase from Buchnera aphidicola subsp. Cinara cedri (strain Cc).